Consider the following 267-residue polypeptide: 3-methyl-2-oxobutanoate hydroxymethyltransferase (267 aa).

Mg(2+) is bound by residues aspartate 45 and aspartate 84. Residues 45-46 (DS), aspartate 84, and lysine 113 each bind 3-methyl-2-oxobutanoate. Residue glutamate 115 coordinates Mg(2+). Glutamate 182 acts as the Proton acceptor in catalysis.

The protein belongs to the PanB family. In terms of assembly, homodecamer; pentamer of dimers. It depends on Mg(2+) as a cofactor.

The protein resides in the cytoplasm. It catalyses the reaction 3-methyl-2-oxobutanoate + (6R)-5,10-methylene-5,6,7,8-tetrahydrofolate + H2O = 2-dehydropantoate + (6S)-5,6,7,8-tetrahydrofolate. It functions in the pathway cofactor biosynthesis; coenzyme A biosynthesis. Catalyzes the reversible reaction in which hydroxymethyl group from 5,10-methylenetetrahydrofolate is transferred onto alpha-ketoisovalerate to form ketopantoate. The protein is 3-methyl-2-oxobutanoate hydroxymethyltransferase of Saccharolobus islandicus (strain L.S.2.15 / Lassen #1) (Sulfolobus islandicus).